The following is a 200-amino-acid chain: Recombination protein RecR (200 aa).

The C4-type zinc-finger motif lies at 58-75 (CPTCFCLKSHPESVCSFC). One can recognise a Toprim domain in the interval 82–177 (SILCIVATPK…SVSRLALGLP (96 aa)).

The protein belongs to the RecR family.

Its function is as follows. May play a role in DNA repair. It seems to be involved in an RecBC-independent recombinational process of DNA repair. It may act with RecF and RecO. This chain is Recombination protein RecR, found in Chlamydia abortus (strain DSM 27085 / S26/3) (Chlamydophila abortus).